Consider the following 215-residue polypeptide: Cytochrome b6 (215 aa).

A helical membrane pass occupies residues 32–52 (IFYCLGGVTLVCFIIQFATGF). Residue Cys35 participates in heme c binding. 2 residues coordinate heme b: His86 and His100. Helical transmembrane passes span 90 to 110 (ASMM…TGGF), 116 to 136 (LTWI…VTGY), and 186 to 206 (LHTF…FLMI). Heme b is bound by residues His187 and His202.

Belongs to the cytochrome b family. PetB subfamily. The 4 large subunits of the cytochrome b6-f complex are cytochrome b6, subunit IV (17 kDa polypeptide, PetD), cytochrome f and the Rieske protein, while the 4 small subunits are PetG, PetL, PetM and PetN. The complex functions as a dimer. The cofactor is heme b. Requires heme c as cofactor.

The protein resides in the cellular thylakoid membrane. In terms of biological role, component of the cytochrome b6-f complex, which mediates electron transfer between photosystem II (PSII) and photosystem I (PSI), cyclic electron flow around PSI, and state transitions. The sequence is that of Cytochrome b6 from Acaryochloris marina (strain MBIC 11017).